Here is a 347-residue protein sequence, read N- to C-terminus: 5-deoxyribose 1-phosphate isomerase (347 aa).

Residues 48–50 (RGA), Arg91, and Gln198 each bind substrate. The active-site Proton donor is Asp239. Residue 249 to 250 (NK) participates in substrate binding.

It belongs to the EIF-2B alpha/beta/delta subunits family. DrdI subfamily.

The enzyme catalyses 5-deoxy-alpha-D-ribose 1-phosphate = 5-deoxy-D-ribulose 1-phosphate. Its pathway is carbohydrate degradation. Functionally, catalyzes the isomerization of 5-deoxy-alpha-D-ribose 1-phosphate to 5-deoxy-D-ribulose 1-phosphate, as part of a 5-deoxyribose salvage pathway that recycles this toxic radical SAM enzyme by-product to mainstream metabolites. This Petrotoga mobilis (strain DSM 10674 / SJ95) protein is 5-deoxyribose 1-phosphate isomerase.